The primary structure comprises 125 residues: RutC family protein STK_08110 (125 aa).

Belongs to the RutC family.

The chain is RutC family protein STK_08110 from Sulfurisphaera tokodaii (strain DSM 16993 / JCM 10545 / NBRC 100140 / 7) (Sulfolobus tokodaii).